An 84-amino-acid polypeptide reads, in one-letter code: Small ribosomal subunit protein bS18A (84 aa).

It belongs to the bacterial ribosomal protein bS18 family. In terms of assembly, part of the 30S ribosomal subunit. Forms a tight heterodimer with protein bS6.

Functionally, binds as a heterodimer with protein bS6 to the central domain of the 16S rRNA, where it helps stabilize the platform of the 30S subunit. The polypeptide is Small ribosomal subunit protein bS18A (rpsR1) (Mycobacterium bovis (strain ATCC BAA-935 / AF2122/97)).